A 559-amino-acid polypeptide reads, in one-letter code: Peptidyl-prolyl isomerase cwc27 (559 aa).

A PPIase cyclophilin-type domain is found at Pro-11 to Val-184. Disordered regions lie at residues Ala-201–Ser-395, Glu-413–Glu-449, and Pro-518–Pro-559. The span at Ala-261–Thr-273 shows a compositional bias: basic and acidic residues. A compositionally biased stretch (pro residues) spans Leu-305–Pro-319. 2 stretches are compositionally biased toward polar residues: residues Gly-384–Ser-394 and Thr-425–Asn-442.

The protein belongs to the cyclophilin-type PPIase family. CWC27 subfamily. As to quaternary structure, associated with the spliceosome.

The protein resides in the cytoplasm. The protein localises to the nucleus. It catalyses the reaction [protein]-peptidylproline (omega=180) = [protein]-peptidylproline (omega=0). PPIases accelerate the folding of proteins. It catalyzes the cis-trans isomerization of proline imidic peptide bonds in oligopeptides. Involved in pre-mRNA splicing. This is Peptidyl-prolyl isomerase cwc27 (cwc27) from Aspergillus fumigatus (strain ATCC MYA-4609 / CBS 101355 / FGSC A1100 / Af293) (Neosartorya fumigata).